Here is a 190-residue protein sequence, read N- to C-terminus: Recombination protein RecR (190 aa).

The segment at 58-73 (CEQCGALSENELCEIC) adopts a C4-type zinc-finger fold. Residues 81–167 (NILCIVESPK…TFSKIAQGIP (87 aa)) form the Toprim domain.

Belongs to the RecR family.

Its function is as follows. May play a role in DNA repair. It seems to be involved in an RecBC-independent recombinational process of DNA repair. It may act with RecF and RecO. The chain is Recombination protein RecR from Campylobacter jejuni (strain RM1221).